The chain runs to 244 residues: Cell division protein ZapD (244 aa).

The protein belongs to the ZapD family. Interacts with FtsZ.

The protein localises to the cytoplasm. Functionally, cell division factor that enhances FtsZ-ring assembly. Directly interacts with FtsZ and promotes bundling of FtsZ protofilaments, with a reduction in FtsZ GTPase activity. This chain is Cell division protein ZapD, found in Shewanella baltica (strain OS185).